The following is a 702-amino-acid chain: Elongation factor G (702 aa).

One can recognise a tr-type G domain in the interval E8 to V290. GTP is bound by residues A17–T24, D88–H92, and N142–D145.

It belongs to the TRAFAC class translation factor GTPase superfamily. Classic translation factor GTPase family. EF-G/EF-2 subfamily.

The protein resides in the cytoplasm. Its function is as follows. Catalyzes the GTP-dependent ribosomal translocation step during translation elongation. During this step, the ribosome changes from the pre-translocational (PRE) to the post-translocational (POST) state as the newly formed A-site-bound peptidyl-tRNA and P-site-bound deacylated tRNA move to the P and E sites, respectively. Catalyzes the coordinated movement of the two tRNA molecules, the mRNA and conformational changes in the ribosome. The chain is Elongation factor G from Acidovorax sp. (strain JS42).